Reading from the N-terminus, the 219-residue chain is Probable N-acetyltransferase camello (219 aa).

The next 2 helical transmembrane spans lie at 44–64 (FITFVAFTSVFMGTGSYVLAL) and 66–86 (SLVALLAAGWYGLYSEFHGLA). The N-acetyltransferase domain occupies 62 to 211 (LALTSLVALL…VHQYTSFTVA (150 aa)).

It belongs to the camello family.

It localises to the golgi apparatus membrane. Plays a role in regulation of gastrulation, possibly by controlled reduction of cell adhesion in the periblastopore region which is necessary for optimal cell motility. This chain is Probable N-acetyltransferase camello, found in Xenopus tropicalis (Western clawed frog).